A 355-amino-acid polypeptide reads, in one-letter code: Erythronate-4-phosphate dehydrogenase (355 aa).

Substrate-binding residues include serine 45 and threonine 66. An NAD(+)-binding site is contributed by aspartate 146. Arginine 206 is a catalytic residue. An NAD(+)-binding site is contributed by aspartate 229. The active site involves glutamate 234. Histidine 251 acts as the Proton donor in catalysis. Glycine 254 lines the NAD(+) pocket. Tyrosine 255 is a substrate binding site.

It belongs to the D-isomer specific 2-hydroxyacid dehydrogenase family. PdxB subfamily. As to quaternary structure, homodimer.

It is found in the cytoplasm. It catalyses the reaction 4-phospho-D-erythronate + NAD(+) = (R)-3-hydroxy-2-oxo-4-phosphooxybutanoate + NADH + H(+). It participates in cofactor biosynthesis; pyridoxine 5'-phosphate biosynthesis; pyridoxine 5'-phosphate from D-erythrose 4-phosphate: step 2/5. Catalyzes the oxidation of erythronate-4-phosphate to 3-hydroxy-2-oxo-4-phosphonooxybutanoate. The chain is Erythronate-4-phosphate dehydrogenase from Acinetobacter baumannii (strain ACICU).